The sequence spans 282 residues: Bifunctional protein FolD (282 aa).

Residues 164–166 (GAS), isoleucine 189, and isoleucine 230 contribute to the NADP(+) site.

Belongs to the tetrahydrofolate dehydrogenase/cyclohydrolase family. Homodimer.

The enzyme catalyses (6R)-5,10-methylene-5,6,7,8-tetrahydrofolate + NADP(+) = (6R)-5,10-methenyltetrahydrofolate + NADPH. It catalyses the reaction (6R)-5,10-methenyltetrahydrofolate + H2O = (6R)-10-formyltetrahydrofolate + H(+). Its pathway is one-carbon metabolism; tetrahydrofolate interconversion. In terms of biological role, catalyzes the oxidation of 5,10-methylenetetrahydrofolate to 5,10-methenyltetrahydrofolate and then the hydrolysis of 5,10-methenyltetrahydrofolate to 10-formyltetrahydrofolate. The sequence is that of Bifunctional protein FolD from Nitratiruptor sp. (strain SB155-2).